We begin with the raw amino-acid sequence, 342 residues long: Phosphoribosylformylglycinamidine cyclo-ligase (342 aa).

It belongs to the AIR synthase family.

It is found in the cytoplasm. It carries out the reaction 2-formamido-N(1)-(5-O-phospho-beta-D-ribosyl)acetamidine + ATP = 5-amino-1-(5-phospho-beta-D-ribosyl)imidazole + ADP + phosphate + H(+). The protein operates within purine metabolism; IMP biosynthesis via de novo pathway; 5-amino-1-(5-phospho-D-ribosyl)imidazole from N(2)-formyl-N(1)-(5-phospho-D-ribosyl)glycinamide: step 2/2. This Staphylococcus aureus (strain USA300) protein is Phosphoribosylformylglycinamidine cyclo-ligase.